Consider the following 47-residue polypeptide: IgA-inducing protein (47 aa).

Positions 1–24 are cleaved as a signal peptide; the sequence is MKKRSVSGCNITILAVVFSHLSAG.

In terms of tissue distribution, expressed in Peyer patches, spleen, thymus, liver and mesenteric lymph node. Expressed at high levels by dendritic cells, and at lower levels by T-cells, monocytes and B-cells.

The protein localises to the secreted. Functionally, enhances IgA secretion from B-cells stimulated via CD40. The chain is IgA-inducing protein (IGIP) from Bos taurus (Bovine).